The primary structure comprises 288 residues: Quinate/shikimate dehydrogenase (288 aa).

K71 and D107 together coordinate substrate. NAD(+)-binding positions include 132-135 (AGGA), 155-158 (NRRD), K205, 232-235 (CVYN), and G255.

The protein belongs to the shikimate dehydrogenase family. As to quaternary structure, homodimer.

It carries out the reaction L-quinate + NAD(+) = 3-dehydroquinate + NADH + H(+). It catalyses the reaction L-quinate + NADP(+) = 3-dehydroquinate + NADPH + H(+). The catalysed reaction is shikimate + NADP(+) = 3-dehydroshikimate + NADPH + H(+). The enzyme catalyses shikimate + NAD(+) = 3-dehydroshikimate + NADH + H(+). It functions in the pathway metabolic intermediate biosynthesis; chorismate biosynthesis; chorismate from D-erythrose 4-phosphate and phosphoenolpyruvate: step 4/7. The actual biological function of YdiB remains unclear, nor is it known whether 3-dehydroshikimate or quinate represents the natural substrate. Catalyzes the reversible NAD-dependent reduction of both 3-dehydroshikimate (DHSA) and 3-dehydroquinate to yield shikimate (SA) and quinate, respectively. It can use both NAD or NADP for catalysis, however it has higher catalytic efficiency with NAD. This is Quinate/shikimate dehydrogenase from Shigella flexneri.